The sequence spans 1220 residues: DNA-directed RNA polymerase subunit beta' (1220 aa).

Zn(2+) is bound by residues C61, C63, C76, and C79. 3 residues coordinate Mg(2+): D450, D452, and D454. A disordered region spans residues 1197–1220 (QPESESEEASDIPKLDDVAKTFDN). Residues 1207 to 1220 (DIPKLDDVAKTFDN) show a composition bias toward basic and acidic residues.

Belongs to the RNA polymerase beta' chain family. The RNAP catalytic core consists of 2 alpha, 1 beta, 1 beta' and 1 omega subunit. When a sigma factor is associated with the core the holoenzyme is formed, which can initiate transcription. Mg(2+) serves as cofactor. The cofactor is Zn(2+).

It catalyses the reaction RNA(n) + a ribonucleoside 5'-triphosphate = RNA(n+1) + diphosphate. In terms of biological role, DNA-dependent RNA polymerase catalyzes the transcription of DNA into RNA using the four ribonucleoside triphosphates as substrates. The polypeptide is DNA-directed RNA polymerase subunit beta' (Leuconostoc mesenteroides subsp. mesenteroides (strain ATCC 8293 / DSM 20343 / BCRC 11652 / CCM 1803 / JCM 6124 / NCDO 523 / NBRC 100496 / NCIMB 8023 / NCTC 12954 / NRRL B-1118 / 37Y)).